A 210-amino-acid polypeptide reads, in one-letter code: Claudin-4 (210 aa).

The Cytoplasmic segment spans residues 1–7; sequence MASMGLQ. An interaction with EPHA2 region spans residues 1–103; that stretch reads MASMGLQVMG…GVLLSVVGGK (103 aa). The chain crosses the membrane as a helical span at residues 8 to 28; that stretch reads VMGIALAVLGWLGAILSCALP. Over 29–81 the chain is Extracellular; that stretch reads MWRVTAFIGSNIVTSQTIWEGLWMNCVVQSTGQMQCKVYDSLLALPQDLQAAR. C54 and C64 are joined by a disulfide. The chain crosses the membrane as a helical span at residues 82 to 102; sequence ALMVVSIILAALGVLLSVVGG. The Cytoplasmic segment spans residues 103–117; that stretch reads KCTNCVEDESAKAKT. The helical transmembrane segment at 118–138 threads the bilayer; it reads MIVAGVVFLLAGLLVMVPASW. Residues 139–160 lie on the Extracellular side of the membrane; sequence TANNIIRDFYNPLVVSGQKREM. The helical transmembrane segment at 161-181 threads the bilayer; sequence GASLYVGWAASGLLLLGGALL. The Cytoplasmic segment spans residues 182–210; that stretch reads CCNCPPRADKPYSAKYSAAARSAPASNYV. The residue at position 209 (Y209) is a Phosphotyrosine. Residues 209 to 210 form an interactions with TJP1, TJP2 and TJP3 region; that stretch reads YV.

It belongs to the claudin family. As to quaternary structure, can form heteropolymeric strands with other claudins. Interacts with CLDN8. Interacts with CLDN1. Directly interacts with TJP1/ZO-1. Interacts with TJP2/ZO-2 and TJP3/ZO-3. Interacts with EPHA2; phosphorylates CLDN4 and may regulate tight junctions. Post-translationally, phosphorylated. Phosphorylation by EPHA2 is stimulated by EFNA1 and alters interaction with TJP1.

It is found in the cell junction. It localises to the tight junction. Its subcellular location is the cell membrane. The enzyme catalyses chloride(in) = chloride(out). The catalysed reaction is bromide(in) = bromide(out). It catalyses the reaction iodide(out) = iodide(in). It carries out the reaction fluoride(in) = fluoride(out). Its function is as follows. Can associate with other claudins to regulate tight junction structural and functional strand dynamics. May coassemble with CLDN8 into tight junction strands containing anion-selective channels that convey paracellular chloride permeability in renal collecting ducts. May integrate into CLDN3 strands to modulate localized tight junction barrier properties. May disrupt strand assembly of channel-forming CLDN2 and CLDN15 and inhibit cation conductance. Cannot form tight junction strands on its own. The sequence is that of Claudin-4 (CLDN4) from Canis lupus familiaris (Dog).